The sequence spans 101 residues: uncharacterized protein (101 aa).

The signal sequence occupies residues 1 to 19 (MKFKYLSTPLLFSALLFSA). Residue C20 is the site of N-palmitoyl cysteine attachment. The S-diacylglycerol cysteine moiety is linked to residue C20.

Belongs to the MG439/MG440 family.

Its subcellular location is the cell membrane. This is an uncharacterized protein from Mycoplasma pneumoniae (strain ATCC 29342 / M129 / Subtype 1) (Mycoplasmoides pneumoniae).